A 218-amino-acid chain; its full sequence is Small ribosomal subunit protein uS3c (218 aa).

Residues 47–118 (VQKQIKNSSN…KIQITLKNVL (72 aa)) form the KH type-2 domain.

Belongs to the universal ribosomal protein uS3 family. In terms of assembly, part of the 30S ribosomal subunit.

Its subcellular location is the plastid. The protein localises to the chloroplast. The polypeptide is Small ribosomal subunit protein uS3c (rps3) (Angiopteris evecta (Mule's foot fern)).